The sequence spans 637 residues: ATP-dependent zinc metalloprotease FtsH (637 aa).

Topologically, residues 1 to 44 are cytoplasmic; that stretch reads MAKHSQHSSPPRKLFDTLNDLWQRAKSEAGLSAEGPEGTRRRNN. A helical membrane pass occupies residues 45-65; sequence LILYLLLVLSTLYLLNGYQTL. Residues 66-141 lie on the Periplasmic side of the membrane; it reads RNEEIPYSEF…TVRYGSNWFS (76 aa). The chain crosses the membrane as a helical span at residues 142–162; sequence SLIFNWIVPIVLLTLFWTWMA. Over 163–637 the chain is Cytoplasmic; the sequence is RRMTGGRGFL…VKAVIREAAS (475 aa). 231 to 238 provides a ligand contact to ATP; that stretch reads GPPGTGKT. Residue histidine 454 participates in Zn(2+) binding. Residue glutamate 455 is part of the active site. Zn(2+) is bound by residues histidine 458 and aspartate 531.

This sequence in the central section; belongs to the AAA ATPase family. In the C-terminal section; belongs to the peptidase M41 family. In terms of assembly, homohexamer. It depends on Zn(2+) as a cofactor.

The protein localises to the cell inner membrane. Functionally, acts as a processive, ATP-dependent zinc metallopeptidase for both cytoplasmic and membrane proteins. Plays a role in the quality control of integral membrane proteins. This is ATP-dependent zinc metalloprotease FtsH from Methylococcus capsulatus (strain ATCC 33009 / NCIMB 11132 / Bath).